A 284-amino-acid polypeptide reads, in one-letter code: Tryptophan 2,3-dioxygenase (284 aa).

Substrate is bound by residues 51-55 (FIIQH), Tyr113, and Arg117. Residue His240 coordinates heme. Thr254 is a substrate binding site.

It belongs to the tryptophan 2,3-dioxygenase family. Homotetramer. Heme serves as cofactor.

It carries out the reaction L-tryptophan + O2 = N-formyl-L-kynurenine. Its pathway is amino-acid degradation; L-tryptophan degradation via kynurenine pathway; L-kynurenine from L-tryptophan: step 1/2. Its function is as follows. Heme-dependent dioxygenase that catalyzes the oxidative cleavage of the L-tryptophan (L-Trp) pyrrole ring and converts L-tryptophan to N-formyl-L-kynurenine. Catalyzes the oxidative cleavage of the indole moiety. The protein is Tryptophan 2,3-dioxygenase of Rhodococcus jostii (strain RHA1).